We begin with the raw amino-acid sequence, 148 residues long: Lysozyme C-2 (148 aa).

Residues 1 to 18 (MKTLLTLGLLLLSVTAQA) form the signal peptide. Residues 19–148 (KVYERCEFAR…LSQYIRNCGV (130 aa)) form the C-type lysozyme domain. Disulfide bonds link Cys24–Cys146, Cys48–Cys134, Cys83–Cys99, and Cys95–Cys113. Residues Glu53 and Asp71 contribute to the active site.

This sequence belongs to the glycosyl hydrolase 22 family. Monomer. Expressed weakly in myeloblasts, moderately in immature macrophages, and strongly in both mature macrophages and macrophage-rich tissues.

It is found in the secreted. It carries out the reaction Hydrolysis of (1-&gt;4)-beta-linkages between N-acetylmuramic acid and N-acetyl-D-glucosamine residues in a peptidoglycan and between N-acetyl-D-glucosamine residues in chitodextrins.. In terms of biological role, lysozymes have primarily a bacteriolytic function; those in tissues and body fluids are associated with the monocyte-macrophage system and enhance the activity of immunoagents. Lyz2 is active against a range of Gram-positive and Gram-negative bacteria. More effective than Lyz1 in killing Gram-negative bacteria. Lyz1 and Lyz2 are equally effective in killing Gram-positive bacteria. The polypeptide is Lysozyme C-2 (Lyz2) (Mus musculus (Mouse)).